A 197-amino-acid polypeptide reads, in one-letter code: MRQAEIVRETKETKVRLAVNLDGTGRASIATGIGFFDHMLDLLARHARFDLEVEAKGDLHVDFHHTTEDVGIVLGQAIRRALGDMRGITRYADLHLPMDETLTRVALDISGRPFLVFRTEFKVGKIGEFDTELVREFFQAFASNAGVTLHVETLYGDNAHHIAESCFKGLARALRAAVAIDPAAAGEIPSTKGALGG.

Belongs to the imidazoleglycerol-phosphate dehydratase family.

The protein resides in the cytoplasm. It catalyses the reaction D-erythro-1-(imidazol-4-yl)glycerol 3-phosphate = 3-(imidazol-4-yl)-2-oxopropyl phosphate + H2O. Its pathway is amino-acid biosynthesis; L-histidine biosynthesis; L-histidine from 5-phospho-alpha-D-ribose 1-diphosphate: step 6/9. This chain is Imidazoleglycerol-phosphate dehydratase, found in Azorhizobium caulinodans (strain ATCC 43989 / DSM 5975 / JCM 20966 / LMG 6465 / NBRC 14845 / NCIMB 13405 / ORS 571).